We begin with the raw amino-acid sequence, 474 residues long: uncharacterized protein (474 aa).

Helical transmembrane passes span Ile17–Tyr39, Phe44–Leu61, Leu81–Tyr103, Gly144–Tyr166, Ile186–Phe208, Ile239–His256, Ile268–Ile286, Leu319–Val341, Ala385–Gly407, and Ile444–Phe466.

This sequence belongs to the TrkH potassium transport family.

Its subcellular location is the cell membrane. This is an uncharacterized protein from Methanocaldococcus jannaschii (strain ATCC 43067 / DSM 2661 / JAL-1 / JCM 10045 / NBRC 100440) (Methanococcus jannaschii).